Consider the following 38-residue polypeptide: Defensin-like peptide 3 (38 aa).

2 disulfide bridges follow: Cys6-Cys36 and Cys13-Cys29.

As to expression, produced by the crural gland and detected in venom from the spur located on each male hind leg.

Its subcellular location is the secreted. Does not show antimicrobial, myotoxic, hemolytic and cell-promoting activities. In Ornithorhynchus anatinus (Duckbill platypus), this protein is Defensin-like peptide 3.